Consider the following 475-residue polypeptide: Neuronal acetylcholine receptor subunit alpha-5 (475 aa).

The N-terminal stretch at 1–29 is a signal peptide; it reads MAAPGWGRWVLGLGPLLLQVFLPFQLVAG. Over 30-261 the chain is Extracellular; it reads RWGPEGAGGG…VIKRLPLFYT (232 aa). C177 and C191 are oxidised to a cystine. Residues N190 and N236 are each glycosylated (N-linked (GlcNAc...) asparagine). A disulfide bridge connects residues C241 and C242. A run of 3 helical transmembrane segments spans residues 262–282, 289–309, and 324–344; these read LFLI…FYLP, ICLC…IEEI, and LVFT…AINI. The Cytoplasmic portion of the chain corresponds to 345–437; that stretch reads HHRSSSTHDA…KFIAQVLDRM (93 aa). Residues 438-458 form a helical membrane-spanning segment; sequence FLWTFLLVSVVGSLGLFVPVI. The Extracellular portion of the chain corresponds to 459-475; the sequence is YKWANIIVPIHIGNENK.

This sequence belongs to the ligand-gated ion channel (TC 1.A.9) family. Acetylcholine receptor (TC 1.A.9.1) subfamily. Alpha-5/CHRNA5 sub-subfamily. Neuronal AChR that forms heteropentamers composed of two different type of subunits: alpha and non-alpha (beta). CHRNA5/alpha-5 subunit is only able to form functional nAChRs when co-assembled with another alpha subunit, can be combined to CHRNA4/alpha-4 or CHRNA3/alpha-3 and CHRNB4/beta-4 or CHRNB2/beta-2 to give rise to functional receptors. Interacts with LYPD6.

The protein resides in the synaptic cell membrane. The protein localises to the cell membrane. It catalyses the reaction Ca(2+)(in) = Ca(2+)(out). The catalysed reaction is K(+)(in) = K(+)(out). The enzyme catalyses Na(+)(in) = Na(+)(out). With respect to regulation, activated by a myriad of ligands such as acetylcholine, cytisine, nicotine, choline and epibatidine. Its function is as follows. Component of neuronal acetylcholine receptors (nAChRs) that function as pentameric, ligand-gated cation channels with high calcium permeability among other activities. nAChRs are excitatory neurotrasnmitter receptors formed by a collection of nAChR subunits known to mediate synaptic transmission in the nervous system and the neuromuscular junction. Each nAchR subunit confers differential attributes to channel properties, including activation, deactivation and desensitization kinetics, pH sensitivity, cation permeability, and binding to allosteric modulators. Has an accessory rather than functional role and is only able to form functional nAChRs when co-assembled with another beta subunit. Participates in pentameric assemblies along with CHRNA3, CHRNA4, CHRNB2 and CHRNB4. Increases receptor sensitivity to acetylcholine and nicotine when associated with CHRNA4 and CHRNB2. Plays a role in nicotine addiction. The sequence is that of Neuronal acetylcholine receptor subunit alpha-5 (CHRNA5) from Bos taurus (Bovine).